A 283-amino-acid polypeptide reads, in one-letter code: MKYVGAHVSAAGGVENAPLAAARIRARAFALFTKNQRQWRAAPLKEESITAFKRNCADHGYRPDHILPHDSYLINLGHPEADNLKKSRTAFFDEMKRCEQLGLKFLNFHPGSHLGKISEDACLSRIAESVNMALDRTASVCAVIENTAGQGTNLGHRFEHLARVIDQVEDKTRVGVCLDTCHTFAAGYDLRTASTYEATLKAFDRVVGLKYLRAVHLNDSIKGLASRVDRHQSLGQGALGLDVFRRIMNDRRFENMPLILETKDATIWEQEIKLLYGMIKGAK.

H69, H109, E145, D179, H182, H216, D229, H231, and E261 together coordinate Zn(2+).

It belongs to the AP endonuclease 2 family. Requires Zn(2+) as cofactor.

It catalyses the reaction Endonucleolytic cleavage to 5'-phosphooligonucleotide end-products.. Its function is as follows. Endonuclease IV plays a role in DNA repair. It cleaves phosphodiester bonds at apurinic or apyrimidinic (AP) sites, generating a 3'-hydroxyl group and a 5'-terminal sugar phosphate. This chain is Probable endonuclease 4, found in Desulfosudis oleivorans (strain DSM 6200 / JCM 39069 / Hxd3) (Desulfococcus oleovorans).